Reading from the N-terminus, the 443-residue chain is ATP-dependent protease ATPase subunit HslU (443 aa).

ATP-binding positions include isoleucine 19 and 61–66; that span reads GVGKTE. Residues 139–158 are disordered; it reads PPRDIGFSQPEEKDSNTRQV. Residues aspartate 256, glutamate 321, and arginine 393 each coordinate ATP.

Belongs to the ClpX chaperone family. HslU subfamily. In terms of assembly, a double ring-shaped homohexamer of HslV is capped on each side by a ring-shaped HslU homohexamer. The assembly of the HslU/HslV complex is dependent on binding of ATP.

Its subcellular location is the cytoplasm. In terms of biological role, ATPase subunit of a proteasome-like degradation complex; this subunit has chaperone activity. The binding of ATP and its subsequent hydrolysis by HslU are essential for unfolding of protein substrates subsequently hydrolyzed by HslV. HslU recognizes the N-terminal part of its protein substrates and unfolds these before they are guided to HslV for hydrolysis. The chain is ATP-dependent protease ATPase subunit HslU from Cupriavidus taiwanensis (strain DSM 17343 / BCRC 17206 / CCUG 44338 / CIP 107171 / LMG 19424 / R1) (Ralstonia taiwanensis (strain LMG 19424)).